A 102-amino-acid polypeptide reads, in one-letter code: MHVKKGDTVQVMSGKDKGKQGVILKAMPSKNRVVVEGVNVMKKHAKPSQANPQGGILEIEAPIHVSNVMPLDPKTGKPTRVGFKVVDGKKVRVAKSGESLDK.

The interval methionine 1–valine 22 is disordered.

It belongs to the universal ribosomal protein uL24 family. As to quaternary structure, part of the 50S ribosomal subunit.

One of two assembly initiator proteins, it binds directly to the 5'-end of the 23S rRNA, where it nucleates assembly of the 50S subunit. Functionally, one of the proteins that surrounds the polypeptide exit tunnel on the outside of the subunit. The protein is Large ribosomal subunit protein uL24 of Exiguobacterium sp. (strain ATCC BAA-1283 / AT1b).